The chain runs to 160 residues: 3-hydroxyacyl-[acyl-carrier-protein] dehydratase FabZ (160 aa).

Residue histidine 63 is part of the active site.

This sequence belongs to the thioester dehydratase family. FabZ subfamily.

Its subcellular location is the cytoplasm. It catalyses the reaction a (3R)-hydroxyacyl-[ACP] = a (2E)-enoyl-[ACP] + H2O. Its function is as follows. Involved in unsaturated fatty acids biosynthesis. Catalyzes the dehydration of short chain beta-hydroxyacyl-ACPs and long chain saturated and unsaturated beta-hydroxyacyl-ACPs. In Xylella fastidiosa (strain M23), this protein is 3-hydroxyacyl-[acyl-carrier-protein] dehydratase FabZ.